Reading from the N-terminus, the 360-residue chain is Phospho-N-acetylmuramoyl-pentapeptide-transferase (360 aa).

The next 10 helical transmembrane spans lie at 25–45 (RGIL…PWMI), 73–93 (TMGG…WADL), 97–117 (YVWV…VDDY), 132–152 (WKYF…YMTA), 168–188 (VSIP…VGSS), 199–219 (GLAI…CYLS), 236–256 (AGEL…FLWF), 263–283 (VFMG…IAVI), 288–308 (IVLF…VIQV), and 338–358 (VIVR…ATLK).

The protein belongs to the glycosyltransferase 4 family. MraY subfamily. The cofactor is Mg(2+).

Its subcellular location is the cell inner membrane. It catalyses the reaction UDP-N-acetyl-alpha-D-muramoyl-L-alanyl-gamma-D-glutamyl-meso-2,6-diaminopimeloyl-D-alanyl-D-alanine + di-trans,octa-cis-undecaprenyl phosphate = di-trans,octa-cis-undecaprenyl diphospho-N-acetyl-alpha-D-muramoyl-L-alanyl-D-glutamyl-meso-2,6-diaminopimeloyl-D-alanyl-D-alanine + UMP. It functions in the pathway cell wall biogenesis; peptidoglycan biosynthesis. Its function is as follows. Catalyzes the initial step of the lipid cycle reactions in the biosynthesis of the cell wall peptidoglycan: transfers peptidoglycan precursor phospho-MurNAc-pentapeptide from UDP-MurNAc-pentapeptide onto the lipid carrier undecaprenyl phosphate, yielding undecaprenyl-pyrophosphoryl-MurNAc-pentapeptide, known as lipid I. The chain is Phospho-N-acetylmuramoyl-pentapeptide-transferase from Pseudomonas fluorescens (strain ATCC BAA-477 / NRRL B-23932 / Pf-5).